The following is a 630-amino-acid chain: Probable potassium transport system protein Kup 2 (630 aa).

Transmembrane regions (helical) follow at residues 14-34 (ATGF…DIGT), 56-76 (VIVL…VTAK), 108-128 (VPLL…SMIT), 145-165 (PALQ…LFAF), 176-196 (AFGP…LLHI), 214-234 (FMLS…LAVT), 255-275 (WLFF…AMVL), 293-313 (LLVP…QAVI), 352-372 (MLLL…SALA), 375-395 (YGIA…VVVW), 402-422 (PAAA…FFSA), and 427-447 (LMEG…LVWT).

It belongs to the HAK/KUP transporter (TC 2.A.72) family.

Its subcellular location is the cell inner membrane. It catalyses the reaction K(+)(in) + H(+)(in) = K(+)(out) + H(+)(out). Functionally, transport of potassium into the cell. Likely operates as a K(+):H(+) symporter. The sequence is that of Probable potassium transport system protein Kup 2 from Rhodopseudomonas palustris (strain BisA53).